A 51-amino-acid chain; its full sequence is Insulin (51 aa).

Intrachain disulfides connect Cys-7/Cys-37, Cys-19/Cys-50, and Cys-36/Cys-41.

It belongs to the insulin family. Heterodimer of a B chain and an A chain linked by two disulfide bonds.

It localises to the secreted. Insulin decreases blood glucose concentration. It increases cell permeability to monosaccharides, amino acids and fatty acids. It accelerates glycolysis, the pentose phosphate cycle, and glycogen synthesis in liver. In Saimiri sciureus (Common squirrel monkey), this protein is Insulin (INS).